The following is a 282-amino-acid chain: 4-deoxy-L-threo-5-hexosulose-uronate ketol-isomerase 2 (282 aa).

The Zn(2+) site is built by His200, His202, Glu207, and His249.

The protein belongs to the KduI family. Zn(2+) is required as a cofactor.

It catalyses the reaction 5-dehydro-4-deoxy-D-glucuronate = 3-deoxy-D-glycero-2,5-hexodiulosonate. It functions in the pathway glycan metabolism; pectin degradation; 2-dehydro-3-deoxy-D-gluconate from pectin: step 4/5. Functionally, catalyzes the isomerization of 5-dehydro-4-deoxy-D-glucuronate to 3-deoxy-D-glycero-2,5-hexodiulosonate. This chain is 4-deoxy-L-threo-5-hexosulose-uronate ketol-isomerase 2 (kduI2), found in Rhizobium meliloti (strain 1021) (Ensifer meliloti).